The sequence spans 220 residues: Superoxide dismutase [Fe] (220 aa).

4 residues coordinate Fe cation: histidine 26, histidine 73, aspartate 164, and histidine 168.

It belongs to the iron/manganese superoxide dismutase family. As to quaternary structure, homodimer. Fe cation is required as a cofactor.

It carries out the reaction 2 superoxide + 2 H(+) = H2O2 + O2. Functionally, destroys superoxide anion radicals which are normally produced within the cells and which are toxic to biological systems. The chain is Superoxide dismutase [Fe] (sodB) from Campylobacter coli.